A 999-amino-acid polypeptide reads, in one-letter code: Probable tape measure protein (999 aa).

It belongs to the skunalikevirus tape measure protein family.

It is found in the virion. Probable tape measure protein. Serves as a base for tail tube protein polymerization and acts as a template for tail length determination. This is Probable tape measure protein from Lactococcus phage p2 (Lactococcus lactis bacteriophage p2).